A 242-amino-acid chain; its full sequence is NADH-quinone oxidoreductase subunit C (242 aa).

The interval 67-101 is insert; that stretch reads VVNSVGLGHKEQGAKPITNRRTTSDNVGESKSIDY.

It belongs to the complex I 30 kDa subunit family. NDH-1 is composed of 14 different subunits. Subunits NuoB, C, D, E, F, and G constitute the peripheral sector of the complex.

The protein resides in the cell inner membrane. It carries out the reaction a quinone + NADH + 5 H(+)(in) = a quinol + NAD(+) + 4 H(+)(out). NDH-1 shuttles electrons from NADH, via FMN and iron-sulfur (Fe-S) centers, to quinones in the respiratory chain. The immediate electron acceptor for the enzyme in this species is believed to be ubiquinone. Couples the redox reaction to proton translocation (for every two electrons transferred, four hydrogen ions are translocated across the cytoplasmic membrane), and thus conserves the redox energy in a proton gradient. This is NADH-quinone oxidoreductase subunit C from Rickettsia conorii (strain ATCC VR-613 / Malish 7).